The chain runs to 215 residues: Transmembrane protein 267 (215 aa).

Transmembrane regions (helical) follow at residues 77 to 97, 114 to 134, and 178 to 198; these read FGEVLLAGFLASVIDVDHFFQ, FLHCSTVIPIAVLSVKLAVHL, and SSFYVISTLSLPHLCSFLMYL.

The protein resides in the membrane. The chain is Transmembrane protein 267 from Mus musculus (Mouse).